We begin with the raw amino-acid sequence, 578 residues long: Phenylalanine--tRNA ligase beta subunit (578 aa).

Positions 292 to 370 constitute a B5 domain; sequence FDTDEKSVSH…RAYGFDNLEP (79 aa). Aspartate 348, aspartate 354, aspartate 357, and aspartate 358 together coordinate Mg(2+).

Belongs to the phenylalanyl-tRNA synthetase beta subunit family. Type 2 subfamily. Tetramer of two alpha and two beta subunits. Requires Mg(2+) as cofactor.

It is found in the cytoplasm. It catalyses the reaction tRNA(Phe) + L-phenylalanine + ATP = L-phenylalanyl-tRNA(Phe) + AMP + diphosphate + H(+). The sequence is that of Phenylalanine--tRNA ligase beta subunit from Halorubrum lacusprofundi (strain ATCC 49239 / DSM 5036 / JCM 8891 / ACAM 34).